The chain runs to 249 residues: Glucosamine-6-phosphate deaminase (249 aa).

The active-site Proton acceptor; for enolization step is Asp67. Asn136 (for ring-opening step) is an active-site residue. His138 functions as the Proton acceptor; for ring-opening step in the catalytic mechanism. Glu143 serves as the catalytic For ring-opening step.

This sequence belongs to the glucosamine/galactosamine-6-phosphate isomerase family. NagB subfamily.

The enzyme catalyses alpha-D-glucosamine 6-phosphate + H2O = beta-D-fructose 6-phosphate + NH4(+). It participates in amino-sugar metabolism; N-acetylneuraminate degradation; D-fructose 6-phosphate from N-acetylneuraminate: step 5/5. In terms of biological role, catalyzes the reversible isomerization-deamination of glucosamine 6-phosphate (GlcN6P) to form fructose 6-phosphate (Fru6P) and ammonium ion. This chain is Glucosamine-6-phosphate deaminase, found in Clostridioides difficile (strain 630) (Peptoclostridium difficile).